A 151-amino-acid chain; its full sequence is Ribosome maturation factor RimP (151 aa).

Belongs to the RimP family.

The protein localises to the cytoplasm. Its function is as follows. Required for maturation of 30S ribosomal subunits. The protein is Ribosome maturation factor RimP of Caldicellulosiruptor bescii (strain ATCC BAA-1888 / DSM 6725 / KCTC 15123 / Z-1320) (Anaerocellum thermophilum).